The primary structure comprises 825 residues: Leucine-rich repeat and guanylate kinase domain-containing protein (825 aa).

A disordered region spans residues aspartate 73–leucine 96. LRR repeat units follow at residues tyrosine 129–valine 149, histidine 150–proline 171, tyrosine 172–lysine 193, asparagine 194–histidine 215, alanine 216–asparagine 237, asparagine 238–proline 259, isoleucine 260–lysine 280, alanine 281–aspartate 302, and leucine 303–lysine 324. The region spanning asparagine 337–lysine 375 is the LRRCT domain. The 184-residue stretch at tyrosine 414–arginine 597 folds into the Guanylate kinase-like domain. Position 421-428 (glycine 421–arginine 428) interacts with ATP. The segment at proline 760–arginine 825 is disordered. Residues serine 763–aspartate 774 show a composition bias toward polar residues. Pro residues predominate over residues threonine 816–arginine 825.

Interacts (via guanylate kinase-like domain) with RIMBP3 (via coiled-coil region). Interacts (via guanylate kinase-like domain) with HOOK2. Interacts (via LRRCT domain) with KLC3. Interacts with HOOK1 and HOOK3.

The protein localises to the cytoplasmic vesicle. The protein resides in the secretory vesicle. It localises to the acrosome. It is found in the cytoplasm. Its subcellular location is the cytoskeleton. The protein localises to the cilium basal body. Functionally, involved in multiple aspects of sperm assembly including acrosome attachment, shaping of the sperm head and in the early aspects of axoneme development. Not essential for primary cilium biogenesis. This Homo sapiens (Human) protein is Leucine-rich repeat and guanylate kinase domain-containing protein (LRGUK).